A 285-amino-acid chain; its full sequence is Elongation factor Ts (285 aa).

The tract at residues 75 to 78 (TDFV) is involved in Mg(2+) ion dislocation from EF-Tu.

The protein belongs to the EF-Ts family.

It is found in the cytoplasm. Functionally, associates with the EF-Tu.GDP complex and induces the exchange of GDP to GTP. It remains bound to the aminoacyl-tRNA.EF-Tu.GTP complex up to the GTP hydrolysis stage on the ribosome. This chain is Elongation factor Ts, found in Alcanivorax borkumensis (strain ATCC 700651 / DSM 11573 / NCIMB 13689 / SK2).